The chain runs to 433 residues: KICSTOR complex protein ITFG2 (433 aa).

One copy of the FG-GAP 1; atypical repeat lies at 19–48; the sequence is FPHAICLGDVDNDTLNELVVGDTSGKVSVY. S104 carries the phosphoserine modification. One copy of the FG-GAP 2; atypical repeat lies at 126 to 155; it reads NTKVMLISDIDGDGCRELVVGYTDRVVRAF. S220 carries the phosphoserine modification.

As to quaternary structure, part of the KICSTOR complex composed of KPTN, ITFG2, KICS2 and SZT2. SZT2 probably serves as a link between the other three proteins in the KICSTOR complex and may mediate the direct interaction with the GATOR complex via GATOR1. The KICSTOR complex interacts directly with the GATOR1 complex and most probably indirectly with the GATOR2 complex in an amino acid-independent manner.

Its subcellular location is the lysosome membrane. As part of the KICSTOR complex functions in the amino acid-sensing branch of the TORC1 signaling pathway. Recruits, in an amino acid-independent manner, the GATOR1 complex to the lysosomal membranes and allows its interaction with GATOR2 and the RAG GTPases. Functions upstream of the RAG GTPases and is required to negatively regulate mTORC1 signaling in absence of amino acids. In absence of the KICSTOR complex mTORC1 is constitutively localized to the lysosome and activated. The KICSTOR complex is also probably involved in the regulation of mTORC1 by glucose. The polypeptide is KICSTOR complex protein ITFG2 (Pongo abelii (Sumatran orangutan)).